A 620-amino-acid chain; its full sequence is Delta(14)-sterol reductase LBR (620 aa).

Positions 1–62 (MPGRKFADGE…DIKPLKSFKQ (62 aa)) constitute a Tudor domain. The Nuclear segment spans residues 1–215 (MPGRKFADGE…TPQRRDLEFG (215 aa)). The segment at 52–111 (SDIKPLKSFKQRKSGSTSSSPSRRRSSRSRSRSRSRSPGRAPKGSRRSVSASYQADAKEK) is disordered. Lysine 55 carries the post-translational modification N6-acetyllysine. Serine 59 and serine 67 each carry phosphoserine. A phosphoserine; by CDK1 mark is found at serine 71 and serine 86. Residues 73–88 (SRRRSSRSRSRSRSRS) are compositionally biased toward basic residues. Serine 88 bears the Phosphoserine mark. A glycan (O-linked (GlcNAc) serine) is linked at serine 96. Serine 99 and serine 101 each carry phosphoserine. A Phosphothreonine modification is found at threonine 123. Serine 133 carries the phosphoserine modification. At threonine 205 the chain carries Phosphothreonine. A run of 8 helical transmembrane segments spans residues 216 to 236 (GVPG…LLLL), 263 to 283 (VCGV…LPVG), 304 to 324 (LYAF…DIEL), 331 to 351 (FLQF…YLYA), 452 to 472 (IIHD…VPFT), 486 to 506 (DLSW…YVIF), 525 to 547 (LAHL…WWGF), and 566 to 586 (PCGF…ALLI). N6-acetyllysine is present on residues lysine 599 and lysine 606.

The protein belongs to the ERG4/ERG24 family. In terms of assembly, interacts with CBX5. Interacts with DNA. Interaction with DNA is sequence independent with higher affinity for supercoiled and relaxed circular DNA than linear DNA. Interacts with lamin B. Interacts with CLNK. Interacts with TMEM147; promoting LBR localization to the nucleus inner membrane. Phosphorylated by CDK1 in mitosis when the inner nuclear membrane breaks down into vesicles that dissociate from the lamina and the chromatin. It is phosphorylated by different protein kinases in interphase when the membrane is associated with these structures. Phosphorylation of LBR and HP1 proteins may be responsible for some of the alterations in chromatin organization and nuclear structure which occur at various times during the cell cycle. Phosphorylated by SRPK1. In late anaphase LBR is dephosphorylated, probably by PP1 and/or PP2A, allowing reassociation with chromatin.

It is found in the nucleus inner membrane. The protein localises to the nucleus. It localises to the cytoplasm. Its subcellular location is the endoplasmic reticulum membrane. The catalysed reaction is 5alpha-cholest-8,14-dien-3beta-ol + NADPH + H(+) = 5alpha-cholest-8-en-3beta-ol + NADP(+). It carries out the reaction 4,4-dimethyl-5alpha-cholesta-8,24-dien-3beta-ol + NADP(+) = 4,4-dimethyl-5alpha-cholesta-8,14,24-trien-3beta-ol + NADPH + H(+). It catalyses the reaction 4,4-dimethyl-8,14-cholestadien-3beta-ol + NADPH + H(+) = 4,4-dimethyl-5alpha-cholest-8-en-3beta-ol + NADP(+). The protein operates within steroid biosynthesis; cholesterol biosynthesis. Functionally, catalyzes the reduction of the C14-unsaturated bond of lanosterol, as part of the metabolic pathway leading to cholesterol biosynthesis. Plays a critical role in myeloid cell cholesterol biosynthesis which is essential to both myeloid cell growth and functional maturation. Mediates the activation of NADPH oxidases, perhaps by maintaining critical levels of cholesterol required for membrane lipid raft formation during neutrophil differentiation. Anchors the lamina and the heterochromatin to the inner nuclear membrane. This chain is Delta(14)-sterol reductase LBR (Lbr), found in Rattus norvegicus (Rat).